The chain runs to 72 residues: DNA-directed RNA polymerase subunit epsilon (72 aa).

This sequence belongs to the RNA polymerase subunit epsilon family. In terms of assembly, RNAP is composed of a core of 2 alpha, a beta and a beta' subunit. The core is associated with a delta subunit, and at least one of epsilon or omega. When a sigma factor is associated with the core the holoenzyme is formed, which can initiate transcription.

It catalyses the reaction RNA(n) + a ribonucleoside 5'-triphosphate = RNA(n+1) + diphosphate. A non-essential component of RNA polymerase (RNAP). This Staphylococcus aureus (strain JH1) protein is DNA-directed RNA polymerase subunit epsilon.